A 301-amino-acid chain; its full sequence is uncharacterized protein (301 aa).

Catalysis depends on charge relay system residues Ser44 and Tyr107. Tyr133 acts as the Proton donor in catalysis. The active-site Schiff-base intermediate with substrate is Lys162.

The protein belongs to the DapA family. In terms of assembly, homotetramer.

It localises to the cytoplasm. This is an uncharacterized protein from Pyrobaculum islandicum (strain DSM 4184 / JCM 9189 / GEO3).